We begin with the raw amino-acid sequence, 251 residues long: Aliphatic sulfonates import ATP-binding protein SsuB (251 aa).

The region spanning 3–231 is the ABC transporter domain; sequence VSIDGVSKYF…PRSKTSESFQ (229 aa). 39-46 lines the ATP pocket; sequence GPSGCGKS.

The protein belongs to the ABC transporter superfamily. Aliphatic sulfonates importer (TC 3.A.1.17.2) family. The complex is composed of two ATP-binding proteins (SsuB), two transmembrane proteins (SsuC) and a solute-binding protein (SsuA).

It localises to the cell membrane. It carries out the reaction ATP + H2O + aliphatic sulfonate-[sulfonate-binding protein]Side 1 = ADP + phosphate + aliphatic sulfonateSide 2 + [sulfonate-binding protein]Side 1.. Part of the ABC transporter complex SsuABC involved in aliphatic sulfonates import. Responsible for energy coupling to the transport system. In Bacillus cereus (strain ATCC 10987 / NRS 248), this protein is Aliphatic sulfonates import ATP-binding protein SsuB.